Here is a 516-residue protein sequence, read N- to C-terminus: Cytochrome P450 1A2 (516 aa).

S69 carries an O-linked (GlcNAc) serine glycan. Substrate is bound by residues F226 and 361 to 365 (DRPQL). C458 contributes to the heme binding site.

Belongs to the cytochrome P450 family. As to quaternary structure, interacts with PGRMC1; the interaction requires PGRMC1 homodimerization. Heme is required as a cofactor.

It localises to the endoplasmic reticulum membrane. The protein resides in the microsome membrane. It carries out the reaction an organic molecule + reduced [NADPH--hemoprotein reductase] + O2 = an alcohol + oxidized [NADPH--hemoprotein reductase] + H2O + H(+). The catalysed reaction is 17beta-estradiol + reduced [NADPH--hemoprotein reductase] + O2 = 2-hydroxy-17beta-estradiol + oxidized [NADPH--hemoprotein reductase] + H2O + H(+). The enzyme catalyses 17beta-estradiol + reduced [NADPH--hemoprotein reductase] + O2 = 4-hydroxy-17beta-estradiol + oxidized [NADPH--hemoprotein reductase] + H2O + H(+). It catalyses the reaction estrone + reduced [NADPH--hemoprotein reductase] + O2 = 2-hydroxyestrone + oxidized [NADPH--hemoprotein reductase] + H2O + H(+). It carries out the reaction estrone + reduced [NADPH--hemoprotein reductase] + O2 = 4-hydroxyestrone + oxidized [NADPH--hemoprotein reductase] + H2O + H(+). The catalysed reaction is cholesterol + reduced [NADPH--hemoprotein reductase] + O2 = 25-hydroxycholesterol + oxidized [NADPH--hemoprotein reductase] + H2O + H(+). The enzyme catalyses all-trans-retinol + reduced [NADPH--hemoprotein reductase] + O2 = all-trans-retinal + oxidized [NADPH--hemoprotein reductase] + 2 H2O + H(+). It catalyses the reaction all-trans-retinal + reduced [NADPH--hemoprotein reductase] + O2 = all-trans-retinoate + oxidized [NADPH--hemoprotein reductase] + H2O + 2 H(+). It carries out the reaction (5Z,8Z,11Z,14Z)-eicosatetraenoate + reduced [NADPH--hemoprotein reductase] + O2 = (14R,15S)-epoxy-(5Z,8Z,11Z)-eicosatrienoate + oxidized [NADPH--hemoprotein reductase] + H2O + H(+). The catalysed reaction is (5Z,8Z,11Z,14Z)-eicosatetraenoate + reduced [NADPH--hemoprotein reductase] + O2 = (14S,15R)-epoxy-(5Z,8Z,11Z)-eicosatrienoate + oxidized [NADPH--hemoprotein reductase] + H2O + H(+). The enzyme catalyses (5Z,8Z,11Z,14Z,17Z)-eicosapentaenoate + reduced [NADPH--hemoprotein reductase] + O2 = (17R,18S)-epoxy-(5Z,8Z,11Z,14Z)-eicosatetraenoate + oxidized [NADPH--hemoprotein reductase] + H2O + H(+). It catalyses the reaction (4Z,7Z,10Z,13Z,16Z,19Z)-docosahexaenoate + reduced [NADPH--hemoprotein reductase] + O2 = (19R,20S)-epoxy-(4Z,7Z,10Z,13Z,16Z)-docosapentaenoate + oxidized [NADPH--hemoprotein reductase] + H2O + H(+). It carries out the reaction (5S)-hydroperoxy-(6E,8Z,11Z,14Z)-eicosatetraenoate = 5-oxo-(6E,8Z,11Z,14Z)-eicosatetraenoate + H2O. The catalysed reaction is (12S)-hydroperoxy-(5Z,8Z,10E,14Z)-eicosatetraenoate = 12-oxo-(5Z,8Z,10E,14Z)-eicosatetraenoate + H2O. The enzyme catalyses (15S)-hydroperoxy-(5Z,8Z,11Z,13E)-eicosatetraenoate = 15-oxo-(5Z,8Z,11Z,13E)-eicosatetraenoate + H2O. It catalyses the reaction (13S)-hydroperoxy-(9Z,11E)-octadecadienoate = 13-oxo-(9Z,11E)-octadecadienoate + H2O. It carries out the reaction (5Z,8Z,11Z,14Z)-eicosatetraenoate + reduced [NADPH--hemoprotein reductase] + O2 = 13-hydroxy-(5Z,8Z,11Z,14Z)-eicosatetraenoate + oxidized [NADPH--hemoprotein reductase] + H2O + H(+). The catalysed reaction is (5Z,8Z,11Z,14Z)-eicosatetraenoate + reduced [NADPH--hemoprotein reductase] + O2 = 19-hydroxy-(5Z,8Z,11Z,14Z)-eicosatetraenoate + oxidized [NADPH--hemoprotein reductase] + H2O + H(+). The enzyme catalyses (9Z,12Z)-octadecadienoate + reduced [NADPH--hemoprotein reductase] + O2 = 11-hydroxy-(9Z,12Z)-octadecadienoate + oxidized [NADPH--hemoprotein reductase] + H2O + H(+). The protein operates within cofactor metabolism; retinol metabolism. It functions in the pathway steroid metabolism; cholesterol metabolism. Its pathway is lipid metabolism; arachidonate metabolism. A cytochrome P450 monooxygenase involved in the metabolism of various endogenous substrates, including fatty acids, steroid hormones and vitamins. Mechanistically, uses molecular oxygen inserting one oxygen atom into a substrate, and reducing the second into a water molecule, with two electrons provided by NADPH via cytochrome P450 reductase (NADPH--hemoprotein reductase). Catalyzes the hydroxylation of carbon-hydrogen bonds. Exhibits high catalytic activity for the formation of hydroxyestrogens from estrone (E1) and 17beta-estradiol (E2), namely 2-hydroxy E1 and E2. Metabolizes cholesterol toward 25-hydroxycholesterol, a physiological regulator of cellular cholesterol homeostasis. May act as a major enzyme for all-trans retinoic acid biosynthesis in the liver. Catalyzes two successive oxidative transformation of all-trans retinol to all-trans retinal and then to the active form all-trans retinoic acid. Primarily catalyzes stereoselective epoxidation of the last double bond of polyunsaturated fatty acids (PUFA), displaying a strong preference for the (R,S) stereoisomer. Catalyzes bisallylic hydroxylation and omega-1 hydroxylation of PUFA. May also participate in eicosanoids metabolism by converting hydroperoxide species into oxo metabolites (lipoxygenase-like reaction, NADPH-independent). Plays a role in the oxidative metabolism of xenobiotics. Catalyzes the N-hydroxylation of heterocyclic amines and the O-deethylation of phenacetin. Metabolizes caffeine via N3-demethylation. This Oryctolagus cuniculus (Rabbit) protein is Cytochrome P450 1A2 (CYP1A2).